The sequence spans 511 residues: 2,3-bisphosphoglycerate-independent phosphoglycerate mutase (511 aa).

D12 provides a ligand contact to Mn(2+). Y36 is modified (phosphotyrosine). S62 serves as a coordination point for Mn(2+). S62 functions as the Phosphoserine intermediate in the catalytic mechanism. Residues H123, 153–154, R185, R191, 261–264, and K336 each bind substrate; these read RD and RPDR. 5 residues coordinate Mn(2+): D403, H407, D444, H445, and H462.

Belongs to the BPG-independent phosphoglycerate mutase family. As to quaternary structure, monomer. Requires Mn(2+) as cofactor.

The catalysed reaction is (2R)-2-phosphoglycerate = (2R)-3-phosphoglycerate. It participates in carbohydrate degradation; glycolysis; pyruvate from D-glyceraldehyde 3-phosphate: step 3/5. In terms of biological role, essential for rapid growth and for sporulation. Catalyzes the interconversion of 2-phosphoglycerate and 3-phosphoglycerate. The polypeptide is 2,3-bisphosphoglycerate-independent phosphoglycerate mutase (Bacillus pumilus (strain SAFR-032)).